The following is a 201-amino-acid chain: Recombination protein RecR (201 aa).

The segment at 57–72 (CCDCRTFTEEERCTIC) adopts a C4-type zinc-finger fold. Residues 81–176 (GQICVVESPA…AASRIAHGVP (96 aa)) form the Toprim domain.

The protein belongs to the RecR family.

Its function is as follows. May play a role in DNA repair. It seems to be involved in an RecBC-independent recombinational process of DNA repair. It may act with RecF and RecO. In Proteus mirabilis (strain HI4320), this protein is Recombination protein RecR.